We begin with the raw amino-acid sequence, 234 residues long: Conidial surface nicotinamide adenine dinucleotide glycohydrolase nadA (234 aa).

Residues 1-20 (MIFTNAILVISALLPATVLS) form the signal peptide. The segment at 21–117 (LQHTEDSLFP…LDTEEQPILG (97 aa)) is thump. 2 disulfide bridges follow: Cys-33–Cys-80 and Cys-38–Cys-50. Asn-45, Asn-95, and Asn-118 each carry an N-linked (GlcNAc...) asparagine glycan. In terms of domain architecture, TNT spans 120–212 (TLPVGMKLDR…GLIDDGYLRR (93 aa)). Arg-129 is an active-site residue. Phe-130, Thr-136, and Arg-148 together coordinate NAD(+). Gln-194 is a catalytic residue. Ser-216, Asp-219, Glu-220, and Glu-223 together coordinate Ca(2+).

Belongs to the fungal surface NADase family. As to quaternary structure, homodimer. Post-translationally, N-glycosylated.

It is found in the secreted. It carries out the reaction NAD(+) + H2O = ADP-D-ribose + nicotinamide + H(+). It catalyses the reaction NADP(+) + H2O = ADP-D-ribose 2'-phosphate + nicotinamide + H(+). With respect to regulation, the catalytic activity is positively regulated by calcium via its binding to the calcium-binding site. Conidial surface nicotinamide adenine dinucleotide glycohydrolase that cleave NAD(+) and NADP(+) but not their reduced counterparts, NADH and NADPH. Lacks both ADP-ribosyl cyclase and base exchange activity and does not mediate synthesis of calcium messengers cADPR or NAADP. Plays a role in pathogenicity by depleting the host's NAD(+) pool. This Aspergillus fumigatus (strain ATCC MYA-4609 / CBS 101355 / FGSC A1100 / Af293) (Neosartorya fumigata) protein is Conidial surface nicotinamide adenine dinucleotide glycohydrolase nadA.